The primary structure comprises 951 residues: Valine--tRNA ligase (951 aa).

Positions 42–52 match the 'HIGH' region motif; sequence PNVTGSLHMGH. The 'KMSKS' region motif lies at 554-558; it reads KMSKS. Position 557 (Lys557) interacts with ATP. Positions 880 to 914 form a coiled coil; the sequence is AGLIDKAAELDRLAKEVAKLEAEIGRIESKLSNEG.

This sequence belongs to the class-I aminoacyl-tRNA synthetase family. ValS type 1 subfamily. In terms of assembly, monomer.

The protein localises to the cytoplasm. It carries out the reaction tRNA(Val) + L-valine + ATP = L-valyl-tRNA(Val) + AMP + diphosphate. Its function is as follows. Catalyzes the attachment of valine to tRNA(Val). As ValRS can inadvertently accommodate and process structurally similar amino acids such as threonine, to avoid such errors, it has a 'posttransfer' editing activity that hydrolyzes mischarged Thr-tRNA(Val) in a tRNA-dependent manner. This chain is Valine--tRNA ligase, found in Pectobacterium atrosepticum (strain SCRI 1043 / ATCC BAA-672) (Erwinia carotovora subsp. atroseptica).